Here is a 408-residue protein sequence, read N- to C-terminus: Aminoacylase-1B (408 aa).

His80 provides a ligand contact to Zn(2+). The active site involves Asp82. Asp113 serves as a coordination point for Zn(2+). Glu147 (proton acceptor) is an active-site residue. Zn(2+) contacts are provided by Glu148, Glu175, and His373. Ser408 is modified (phosphoserine).

This sequence belongs to the peptidase M20A family. As to quaternary structure, homodimer. The cofactor is Zn(2+). Expressed in kidney.

The protein resides in the cytoplasm. The enzyme catalyses an N-acyl-L-amino acid + H2O = an L-alpha-amino acid + a carboxylate. The catalysed reaction is an N-acetyl-L-cysteine-S-conjugate + H2O = an S-substituted L-cysteine + acetate. Involved in the hydrolysis of N-acylated or N-acetylated amino acids (except L-aspartate). This Rattus norvegicus (Rat) protein is Aminoacylase-1B (Acy1b).